The primary structure comprises 286 residues: Prepilin leader peptidase/N-methyltransferase (286 aa).

Residues 11–31 (LGIFFVGLFSLMVGSFLNVVI) form a helical membrane-spanning segment. 4 residues coordinate Zn(2+): C74, C77, C99, and C102. Helical transmembrane passes span 106–126 (ISAR…IVAF), 132–152 (LSLG…FIDA), 161–181 (LTLP…FINL), 185–205 (VIGA…FKLI), 231–251 (LPII…GIGL), and 257–277 (MPFG…GAQI).

Belongs to the peptidase A24 family. Zn(2+) serves as cofactor.

It localises to the cell inner membrane. The enzyme catalyses Typically cleaves a -Gly-|-Phe- bond to release an N-terminal, basic peptide of 5-8 residues from type IV prepilin, and then N-methylates the new N-terminal amino group, the methyl donor being S-adenosyl-L-methionine.. In terms of biological role, plays an essential role in type IV pili and type II pseudopili formation by proteolytically removing the leader sequence from substrate proteins and subsequently monomethylating the alpha-amino group of the newly exposed N-terminal phenylalanine. This Dichelobacter nodosus (Bacteroides nodosus) protein is Prepilin leader peptidase/N-methyltransferase (fimP).